We begin with the raw amino-acid sequence, 751 residues long: Oxysterol-binding protein-related protein 11 (751 aa).

M1 is modified (N-acetylmethionine). The disordered stretch occupies residues 1–57 (MQGGEPASVMKVSESEGKLEGLATAVTPNKNSGNSSCGGAISSSSSNSSRGGSAKGW). S15 is subject to Phosphoserine. T27 is subject to Phosphothreonine. A compositionally biased stretch (low complexity) spans 31–52 (NSGNSSCGGAISSSSSNSSRGG). The region spanning 63–160 (MESVNGYLMK…WVSRLQICTQ (98 aa)) is the PH domain. Residues S177, S179, S182, S186, S189, and S194 each carry the phosphoserine modification. Disordered stretches follow at residues 475–497 (SGVSSSSSTPAITDHAPLPEEAP) and 694–716 (EIDKATEHKRSLEERQRTEERLR).

It belongs to the OSBP family. In terms of assembly, heterodimer with OSBPL9.

The protein resides in the late endosome membrane. Its subcellular location is the golgi apparatus. It is found in the trans-Golgi network membrane. It carries out the reaction a 1,2-diacyl-sn-glycero-3-phospho-(1D-myo-inositol 4-phosphate)(out) + a 1,2-diacyl-sn-glycero-3-phospho-L-serine(in) = a 1,2-diacyl-sn-glycero-3-phospho-(1D-myo-inositol 4-phosphate)(in) + a 1,2-diacyl-sn-glycero-3-phospho-L-serine(out). Its function is as follows. Plays a role in regulating ADIPOQ and FABP4 levels in differentiating adipocytes and is also involved in regulation of adipocyte triglyceride storage. Weakly binds 25-hydroxycholesterol. Interacts with OSBPL9 to function as lipid transfer proteins. Together they form a heterodimer that localizes at the ER-trans-Golgi membrane contact sites, and exchanges phosphatidylserine (1,2-diacyl-sn-glycero-3-phospho-L-serine, PS) for phosphatidylinositol-4-phosphate (1,2-diacyl-sn-glycero-3-phospho-(1D-myo-inositol 4-phosphate), PI(4)P) between the two organelles, a step that is critical for sphingomyelin synthesis in the Golgi complex. The polypeptide is Oxysterol-binding protein-related protein 11 (Osbpl11) (Mus musculus (Mouse)).